The chain runs to 874 residues: Pyruvate, phosphate dikinase (874 aa).

Residues 2-340 are N-terminal; it reads AKWVYKFEEG…LYFLQTRNGK (339 aa). Position 92 (arginine 92) interacts with ATP. A linker 1 region spans residues 340-399; that stretch reads KRTAPAALQIACDLVDEGMITEEEAVVRIEAKSLDQLLHPTFNPAALKAGEVIGSALPAS. The segment at 400–498 is central; it reads PGAAAGKVYF…TFAEGDYISL (99 aa). A Phosphothreonine; by PDRP1 modification is found at threonine 453. Histidine 455 (tele-phosphohistidine intermediate) is an active-site residue. The segment at 499–533 is linker 2; the sequence is DGSTGKIYKGDIETQEASVSGSFERIMVWADKFRT. The interval 534–874 is C-terminal; sequence LKVRTNADTP…AAAQAALNNK (341 aa). Substrate contacts are provided by arginine 561, arginine 617, glutamate 745, glycine 766, threonine 767, asparagine 768, and aspartate 769. Residue glutamate 745 participates in Mg(2+) binding. Residue aspartate 769 participates in Mg(2+) binding. Catalysis depends on cysteine 831, which acts as the Proton donor.

The protein belongs to the PEP-utilizing enzyme family. As to quaternary structure, homodimer. Mg(2+) is required as a cofactor. Phosphorylation of Thr-453 in the dark inactivates the enzyme. Dephosphorylation upon light stimulation reactivates the enzyme.

The catalysed reaction is pyruvate + phosphate + ATP = phosphoenolpyruvate + AMP + diphosphate + H(+). Its activity is regulated as follows. Activated by light-induced dephosphorylation. Inhibited by dark-induced phosphorylation. Both reactions are catalyzed by PDRP1. Functionally, catalyzes the reversible phosphorylation of pyruvate and phosphate. In E.histolytica and C.symbiosus, PPDK functions in the direction of ATP synthesis. The protein is Pyruvate, phosphate dikinase (ppdK) of Clostridium symbiosum (Bacteroides symbiosus).